Here is a 910-residue protein sequence, read N- to C-terminus: Auxilin (910 aa).

3 tandem repeats follow at residues 33-36 (NLKD), 37-40 (NLKD), and 41-44 (TLKD). The segment at 33–44 (NLKDNLKDTLKD) is 3 X 4 AA approximate tandem repeats. Positions 52 to 219 (SVTSYTKGDL…GYMCDLLADK (168 aa)) constitute a Phosphatase tensin-type domain. A Phosphoserine modification is found at S109. Residue C161 is the Phosphocysteine intermediate of the active site. Residues 225-363 (FKPLTIKSIT…FQVTLDVELQ (139 aa)) form the C2 tensin-type domain. The short motif at 406–414 (PIDIPPDNP) is the SH3-binding element. Positions 448-772 (QESEQSDDEL…RGKAAANLEG (325 aa)) are disordered. Phosphoserine occurs at positions 450, 453, 560, and 567. Residues 547-569 (PSGPTSTQSTPRRSATSTSASPT) show a composition bias toward low complexity. Positions 596-626 (FLNTASASSDPFLQPTRSPSPTVHASSTPAV) are enriched in polar residues. The segment covering 651-666 (SAATSPTGSSHGTPTH) has biased composition (low complexity). Residues 715-725 (MGGGWQQGGGY) show a composition bias toward gly residues. Polar residues predominate over residues 732-758 (SKPQSSMPHSSPQNRPNYNVSFSSMPG). In terms of domain architecture, J spans 846-910 (TKWKPVGMAD…FENQGQKPLY (65 aa)).

As to quaternary structure, forms a complex composed of HSPA8, CLTC and DNAJC6. Interacts with HSPA8/HSC70 in an ATP-dependent manner; this interaction stimulates the HSPA8's ATPase activity. Interacts with CLTC; this interaction produces a local change in heavy-chain contacts, creating a detectable global distortion of the clathrin coat. Interacts with AP2A2. Interacts with DNM1(GTP-bound form); this interaction allows clathrin-coated vesicle (CCV) formation at the plasma membrane. The N-terminus is blocked. In terms of processing, phosphorylation at Ser-567 modulates its ability to bind CLTC and therefore the synaptic vesicle endocytosis (SVE). As to expression, brain.

The protein localises to the cytoplasmic vesicle. Its subcellular location is the clathrin-coated vesicle. In terms of biological role, may act as a protein phosphatase and/or a lipid phosphatase. Co-chaperone that recruits HSPA8/HSC70 to clathrin-coated vesicles (CCVs) and promotes the ATP-dependent dissociation of clathrin from CCVs and participates in clathrin-mediated endocytosis of synaptic vesicles and their recycling and also in intracellular trafficking. Firstly, binds tightly to the clathrin cages, at a ratio of one DNAJC6 per clathrin triskelion. The HSPA8:ATP complex then binds to the clathrin-auxilin cage, initially at a ratio of one HSPA8 per triskelion leading to ATP hydrolysis stimulation and causing a conformational change in the HSPA8. This cycle is repeated three times to drive to a complex containing the clathrin-auxilin cage associated to three HSPA8:ADP complex. The ATP hydrolysis of the third HSPA8:ATP complex leads to a concerted dismantling of the cage into component triskelia. Then, dissociates from the released triskelia and be recycled to initiate another cycle of HSPA8's recruitment. Also acts during the early steps of clathrin-coated vesicle (CCV) formation through its interaction with the GTP bound form of DNM1. This chain is Auxilin, found in Bos taurus (Bovine).